The primary structure comprises 430 residues: Sphingosine-1-phosphate phosphatase 1 (430 aa).

Residues 34–100 (GSPKAGEDAE…PRRAGSLRRN (67 aa)) are disordered. Ser101 carries the post-translational modification Phosphoserine. At Thr103 the chain carries Phosphothreonine. 4 consecutive transmembrane segments (helical) span residues 121–141 (FCFGTELGNELFYIIFFPFWI), 152–172 (LVIIWVLVMYLGQCTKDIIRW), 193–213 (MPSTHAMSGTAIPIAMILLTY), and 216–236 (WQYPLIYGLILIPCWSSLVCL). Positions 167 to 175 (KDIIRWPRP) are phosphatase sequence motif I. Residues 194-197 (PSTH) form a phosphatase sequence motif II region. Residue His197 is the Proton donor of the active site. The tract at residues 237–248 (SRIYMGMHSILD) is phosphatase sequence motif III. Catalysis depends on His244, which acts as the Nucleophile. A run of 5 helical transmembrane segments spans residues 246-266 (ILDVIAGFLYTILILIIFYPL), 279-299 (YAPLIIIGLHLILGIFSFTLD), 311-331 (ILGSGAGIACGSHAAYNLGIS), 348-368 (VTLFGKAILRVVIGMLLVLFV), and 409-429 (YGTVGFSITFLIPYIFSFIGI).

Belongs to the type 2 lipid phosphate phosphatase family.

The protein resides in the endoplasmic reticulum membrane. Its subcellular location is the cell membrane. It carries out the reaction sphinganine 1-phosphate + H2O = sphinganine + phosphate. The enzyme catalyses sphing-4-enine 1-phosphate + H2O = sphing-4-enine + phosphate. Its function is as follows. Specifically dephosphorylates sphingosine 1-phosphate (S1P), dihydro-S1P, and phyto-S1P. Does not act on ceramide 1-phosphate, lysophosphatidic acid or phosphatidic acid. Sphingosine-1-phosphate phosphatase activity is needed for efficient recycling of sphingosine into the sphingolipid synthesis pathway. Regulates the intracellular levels of the bioactive sphingolipid metabolite S1P that regulates diverse biological processes acting both as an extracellular receptor ligand or as an intracellular second messenger. Involved in efficient ceramide synthesis from exogenous sphingoid bases. Converts S1P to sphingosine, which is readily metabolized to ceramide via ceramide synthase. In concert with sphingosine kinase 2 (SphK2), recycles sphingosine into ceramide through a phosphorylation/dephosphorylation cycle. Regulates endoplasmic-to-Golgi trafficking of ceramides, resulting in the regulation of ceramide levels in the endoplasmic reticulum, preferentially long-chain ceramide species, and influences the anterograde membrane transport of both ceramide and proteins from the endoplasmic reticulum to the Golgi apparatus. The modulation of intracellular ceramide levels in turn regulates apoptosis. Via S1P levels, modulates resting tone, intracellular Ca(2+) and myogenic vasoconstriction in resistance arteries. Also involved in unfolded protein response (UPR) and ER stress-induced autophagy via regulation of intracellular S1P levels. Involved in the regulation of epidermal homeostasis and keratinocyte differentiation. This Rattus norvegicus (Rat) protein is Sphingosine-1-phosphate phosphatase 1.